Consider the following 618-residue polypeptide: UvrABC system protein C (618 aa).

Residues 13–92 (DKPGVYLMKN…IKKYRPKYNI (80 aa)) form the GIY-YIG domain. The region spanning 204 to 239 (LDIVENFKLNMEKAAENLEFEKAAMLRDKINIIEKI) is the UVR domain.

It belongs to the UvrC family. Interacts with UvrB in an incision complex.

It localises to the cytoplasm. Its function is as follows. The UvrABC repair system catalyzes the recognition and processing of DNA lesions. UvrC both incises the 5' and 3' sides of the lesion. The N-terminal half is responsible for the 3' incision and the C-terminal half is responsible for the 5' incision. The protein is UvrABC system protein C of Clostridium botulinum (strain Kyoto / Type A2).